The primary structure comprises 239 residues: Probable transcriptional regulatory protein BLi00754/BL02339 (239 aa).

Belongs to the TACO1 family. YeeN subfamily.

It localises to the cytoplasm. The polypeptide is Probable transcriptional regulatory protein BLi00754/BL02339 (Bacillus licheniformis (strain ATCC 14580 / DSM 13 / JCM 2505 / CCUG 7422 / NBRC 12200 / NCIMB 9375 / NCTC 10341 / NRRL NRS-1264 / Gibson 46)).